The sequence spans 427 residues: Enolase (427 aa).

Glutamine 163 is a (2R)-2-phosphoglycerate binding site. Catalysis depends on glutamate 205, which acts as the Proton donor. Residues aspartate 242, glutamate 285, and aspartate 312 each contribute to the Mg(2+) site. (2R)-2-phosphoglycerate is bound by residues lysine 337, arginine 366, serine 367, and lysine 388. Residue lysine 337 is the Proton acceptor of the active site.

It belongs to the enolase family. It depends on Mg(2+) as a cofactor.

It localises to the cytoplasm. The protein resides in the secreted. The protein localises to the cell surface. The catalysed reaction is (2R)-2-phosphoglycerate = phosphoenolpyruvate + H2O. It functions in the pathway carbohydrate degradation; glycolysis; pyruvate from D-glyceraldehyde 3-phosphate: step 4/5. Functionally, catalyzes the reversible conversion of 2-phosphoglycerate (2-PG) into phosphoenolpyruvate (PEP). It is essential for the degradation of carbohydrates via glycolysis. The protein is Enolase of Rhodopseudomonas palustris (strain ATCC BAA-98 / CGA009).